We begin with the raw amino-acid sequence, 709 residues long: Phosphoribosylformylglycinamidine synthase subunit PurL (709 aa).

H36 is an active-site residue. Positions 39 and 80 each coordinate ATP. Position 82 (E82) interacts with Mg(2+). Substrate contacts are provided by residues 83–86 (SHNH) and R105. H84 acts as the Proton acceptor in catalysis. Position 106 (D106) interacts with Mg(2+). Q226 provides a ligand contact to substrate. D252 provides a ligand contact to Mg(2+). 294–296 (ETQ) contributes to the substrate binding site. ATP is bound by residues D470 and G507. A substrate-binding site is contributed by S510.

It belongs to the FGAMS family. As to quaternary structure, monomer. Part of the FGAM synthase complex composed of 1 PurL, 1 PurQ and 2 PurS subunits.

The protein localises to the cytoplasm. The enzyme catalyses N(2)-formyl-N(1)-(5-phospho-beta-D-ribosyl)glycinamide + L-glutamine + ATP + H2O = 2-formamido-N(1)-(5-O-phospho-beta-D-ribosyl)acetamidine + L-glutamate + ADP + phosphate + H(+). Its pathway is purine metabolism; IMP biosynthesis via de novo pathway; 5-amino-1-(5-phospho-D-ribosyl)imidazole from N(2)-formyl-N(1)-(5-phospho-D-ribosyl)glycinamide: step 1/2. Part of the phosphoribosylformylglycinamidine synthase complex involved in the purines biosynthetic pathway. Catalyzes the ATP-dependent conversion of formylglycinamide ribonucleotide (FGAR) and glutamine to yield formylglycinamidine ribonucleotide (FGAM) and glutamate. The FGAM synthase complex is composed of three subunits. PurQ produces an ammonia molecule by converting glutamine to glutamate. PurL transfers the ammonia molecule to FGAR to form FGAM in an ATP-dependent manner. PurS interacts with PurQ and PurL and is thought to assist in the transfer of the ammonia molecule from PurQ to PurL. The protein is Phosphoribosylformylglycinamidine synthase subunit PurL of Saccharolobus islandicus (strain M.16.27) (Sulfolobus islandicus).